Reading from the N-terminus, the 340-residue chain is tRNA N6-adenosine threonylcarbamoyltransferase (340 aa).

Residues His-111 and His-115 each coordinate Fe cation. Residues 133 to 137 (VVSGG), Asp-166, Gly-179, Asp-183, and Asn-272 each bind substrate. Asp-300 contributes to the Fe cation binding site.

The protein belongs to the KAE1 / TsaD family. Requires Fe(2+) as cofactor.

It is found in the cytoplasm. It carries out the reaction L-threonylcarbamoyladenylate + adenosine(37) in tRNA = N(6)-L-threonylcarbamoyladenosine(37) in tRNA + AMP + H(+). Functionally, required for the formation of a threonylcarbamoyl group on adenosine at position 37 (t(6)A37) in tRNAs that read codons beginning with adenine. Is involved in the transfer of the threonylcarbamoyl moiety of threonylcarbamoyl-AMP (TC-AMP) to the N6 group of A37, together with TsaE and TsaB. TsaD likely plays a direct catalytic role in this reaction. The protein is tRNA N6-adenosine threonylcarbamoyltransferase of Geobacter sulfurreducens (strain ATCC 51573 / DSM 12127 / PCA).